The following is a 214-amino-acid chain: uncharacterized protein (214 aa).

4 consecutive transmembrane segments (helical) span residues 10–30 (IPPLAVYLLVSGVVGVESLGI), 55–75 (IGVGVVAVIGAAVGDSIGYAI), 147–167 (VSGAICWAGGTTALVYFAGMA), and 174–194 (RFSWIALIITVVVGIIAAILL).

This sequence belongs to the DedA family.

The protein resides in the cell membrane. This is an uncharacterized protein from Mycobacterium leprae (strain TN).